The primary structure comprises 154 residues: Ribosome maturation factor RimP (154 aa).

It belongs to the RimP family.

It is found in the cytoplasm. Functionally, required for maturation of 30S ribosomal subunits. This is Ribosome maturation factor RimP from Finegoldia magna (strain ATCC 29328 / DSM 20472 / WAL 2508) (Peptostreptococcus magnus).